A 66-amino-acid polypeptide reads, in one-letter code: Conotoxin TsMEKL-03 (66 aa).

Positions 1–9 are cleaved as a signal peptide; the sequence is VILLMSTQA. Positions 10–38 are excised as a propeptide; the sequence is LIQSGVEKRSNKIKALSKRKTTAESWWEG. Disulfide bonds link Cys-40/Cys-54, Cys-47/Cys-58, and Cys-53/Cys-63.

Belongs to the conotoxin O2 superfamily. In terms of tissue distribution, expressed by the venom duct.

Its subcellular location is the secreted. This is Conotoxin TsMEKL-03 from Conus tessulatus (Tessellate cone).